The following is a 208-amino-acid chain: Imidazoleglycerol-phosphate dehydratase (208 aa).

Belongs to the imidazoleglycerol-phosphate dehydratase family.

It catalyses the reaction D-erythro-1-(imidazol-4-yl)glycerol 3-phosphate = 3-(imidazol-4-yl)-2-oxopropyl phosphate + H2O. It functions in the pathway amino-acid biosynthesis; L-histidine biosynthesis; L-histidine from 5-phospho-alpha-D-ribose 1-diphosphate: step 6/9. This chain is Imidazoleglycerol-phosphate dehydratase (his3), found in Trichoderma harzianum (Hypocrea lixii).